The sequence spans 131 residues: MRHYEIVFMVHPDQSEQVPGMIERYTAAITGAEGKIHRLEDWGRRQLAYPINKLHKAHYVLMNVEAPQEVIDELETTFRFNDAVIRSMVMRTKHAVTEASPMVKAKDERRERRDDFANETADDAEAGDSEE.

Lys93 carries the post-translational modification N6-acetyllysine. Positions 98–131 (EASPMVKAKDERRERRDDFANETADDAEAGDSEE) are disordered. Residues 104-116 (KAKDERRERRDDF) show a composition bias toward basic and acidic residues. Acidic residues predominate over residues 120–131 (TADDAEAGDSEE).

Belongs to the bacterial ribosomal protein bS6 family.

Functionally, binds together with bS18 to 16S ribosomal RNA. This is Small ribosomal subunit protein bS6 from Escherichia fergusonii (strain ATCC 35469 / DSM 13698 / CCUG 18766 / IAM 14443 / JCM 21226 / LMG 7866 / NBRC 102419 / NCTC 12128 / CDC 0568-73).